A 206-amino-acid polypeptide reads, in one-letter code: Urease accessory protein UreG (206 aa).

13-20 serves as a coordination point for GTP; the sequence is GPVGSGKT.

The protein belongs to the SIMIBI class G3E GTPase family. UreG subfamily. In terms of assembly, homodimer. UreD, UreF and UreG form a complex that acts as a GTP-hydrolysis-dependent molecular chaperone, activating the urease apoprotein by helping to assemble the nickel containing metallocenter of UreC. The UreE protein probably delivers the nickel.

The protein resides in the cytoplasm. Its function is as follows. Facilitates the functional incorporation of the urease nickel metallocenter. This process requires GTP hydrolysis, probably effectuated by UreG. The sequence is that of Urease accessory protein UreG from Natronomonas pharaonis (strain ATCC 35678 / DSM 2160 / CIP 103997 / JCM 8858 / NBRC 14720 / NCIMB 2260 / Gabara) (Halobacterium pharaonis).